We begin with the raw amino-acid sequence, 260 residues long: MFDIGVNLTSSQFEKDREQVVIRAKLAGVSGILITGTNAQESHQAMLLAQAYPDYCWSTAGVHPHDASQWNDAIAEQLHQMANAACVVSIGECGLDFNRNFSTPEEQEQAFSAQLAIAAELSMPVFLHCRDAHPRFISLLTPWLSQLPAAVVHCFTGNRHELDECLAAGLMIGITGWVCDERRGLELRALLPHIPADRLLVETDAPYLLPRDLRPKPASRRNEPCYLPHIIRQIAEWRGEDATWLGQTTDENARRVFRLA.

A divalent metal cation is bound by residues E92, H128, and H153.

It belongs to the metallo-dependent hydrolases superfamily. TatD-type hydrolase family. TatD subfamily. Monomer. The cofactor is Mg(2+).

The protein localises to the cytoplasm. Its function is as follows. 3'-5' exonuclease that prefers single-stranded DNA and RNA. May play a role in the H(2)O(2)-induced DNA damage repair. The polypeptide is 3'-5' ssDNA/RNA exonuclease TatD (Pectobacterium atrosepticum (strain SCRI 1043 / ATCC BAA-672) (Erwinia carotovora subsp. atroseptica)).